Here is a 376-residue protein sequence, read N- to C-terminus: Putative glutamate--cysteine ligase 2-1 (376 aa).

This sequence belongs to the glutamate--cysteine ligase type 2 family. YbdK subfamily.

The enzyme catalyses L-cysteine + L-glutamate + ATP = gamma-L-glutamyl-L-cysteine + ADP + phosphate + H(+). ATP-dependent carboxylate-amine ligase which exhibits weak glutamate--cysteine ligase activity. In Mycobacterium sp. (strain JLS), this protein is Putative glutamate--cysteine ligase 2-1.